The following is a 515-amino-acid chain: Protein disulfide-isomerase (515 aa).

The N-terminal stretch at 1 to 20 (MRTFAPWILSLLGASAVASA) is a signal peptide. Thioredoxin domains are found at residues 21–136 (ADAT…QSLP) and 343–470 (VLDD…ENGK). Residues C58, C61, C393, and C396 each act as nucleophile in the active site. 2 cysteine pairs are disulfide-bonded: C58-C61 and C393-C396. Composition is skewed to basic and acidic residues over residues 472 to 496 (KVDA…RAAS) and 506 to 515 (SDDKSEHDEL). A disordered region spans residues 472-515 (KVDALEVDPKKEQESGDATETRAASDETETPAATSDDKSEHDEL). The Prevents secretion from ER motif lies at 512-515 (HDEL).

This sequence belongs to the protein disulfide isomerase family.

The protein resides in the endoplasmic reticulum lumen. The catalysed reaction is Catalyzes the rearrangement of -S-S- bonds in proteins.. Participates in the folding of proteins containing disulfide bonds, may be involved in glycosylation, prolyl hydroxylation and triglyceride transfer. The protein is Protein disulfide-isomerase (pdiA) of Aspergillus oryzae (strain ATCC 42149 / RIB 40) (Yellow koji mold).